A 130-amino-acid chain; its full sequence is Putative protein ZNF815 (130 aa).

The chain is Putative protein ZNF815 (ZNF815P) from Homo sapiens (Human).